Consider the following 137-residue polypeptide: Interferon-induced transmembrane protein 3 (137 aa).

Residues 1-57 (MNHTSQAFITAASGGQPPNYERIKEEYEVAEMGAPHGSASVRTTVINMPREVSVPDH) lie on the Cytoplasmic side of the membrane. The residue at position 20 (Y20) is a Phosphotyrosine. Residue K24 forms a Glycyl lysine isopeptide (Lys-Gly) (interchain with G-Cter in ubiquitin) linkage. Y27 carries the post-translational modification Phosphotyrosine. Residues 58–78 (VVWSLFNTLFMNFCCLGFIAY) constitute an intramembrane region (helical). Positions 60-93 (WSLFNTLFMNFCCLGFIAYAYSVKSRDRKMVGDV) are interaction with SPP1. 2 S-palmitoyl cysteine lipidation sites follow: C71 and C72. Residues 79 to 109 (AYSVKSRDRKMVGDVTGAQAYASTAKCLNIS) are Cytoplasmic-facing. Glycyl lysine isopeptide (Lys-Gly) (interchain with G-Cter in ubiquitin) cross-links involve residues K83, K88, and K104. C105 is lipidated: S-palmitoyl cysteine. The interval 108-133 (ISTLVLSILMVVITIVSVIIIVLNAQ) is interaction with VAPA. A helical membrane pass occupies residues 110–130 (TLVLSILMVVITIVSVIIIVL). Topologically, residues 131-137 (NAQNLHT) are extracellular.

This sequence belongs to the CD225/Dispanin family. As to quaternary structure, interacts with ATP6V0B. Interacts with CD81. Interacts with SPP1; the interaction reduces OPN expression. Interacts with BRI3. Post-translationally, polyubiquitinated with both 'Lys-48' and 'Lys-63' linkages. Ubiquitination negatively regulates antiviral activity. Lys-24 is the most prevalent ubiquitination site. Phosphorylation at Tyr-20 is required for endosomal and lysosomal location. Expressed in acinar cell. Predominantly expressed in nascent primordial germ cells, as well as in gonadal germ cells.

It is found in the cell membrane. It localises to the late endosome membrane. The protein localises to the early endosome membrane. The protein resides in the lysosome membrane. Its subcellular location is the cytoplasm. It is found in the perinuclear region. Functionally, IFN-induced antiviral protein which disrupts intracellular cholesterol homeostasis. Inhibits the entry of viruses to the host cell cytoplasm by preventing viral fusion with cholesterol depleted endosomes. May inactivate new enveloped viruses which buds out of the infected cell, by letting them go out with a cholesterol depleted membrane. Active against multiple viruses, including influenza A virus, SARS coronaviruses (SARS-CoV and SARS-CoV-2), Marburg virus (MARV), Ebola virus (EBOV), Dengue virus (DNV), West Nile virus (WNV), human immunodeficiency virus type 1 (HIV-1), hepatitis C virus (HCV) and vesicular stomatitis virus (VSV). Can inhibit: influenza virus hemagglutinin protein-mediated viral entry, MARV and EBOV GP1,2-mediated viral entry, SARS-CoV and SARS-CoV-2 S protein-mediated viral entry and VSV G protein-mediated viral entry. Plays a critical role in the structural stability and function of vacuolar ATPase (v-ATPase). Establishes physical contact with the v-ATPase of endosomes which is critical for proper clathrin localization and is also required for the function of the v-ATPase to lower the pH in phagocytic endosomes thus establishing an antiviral state. In hepatocytes, IFITM proteins act in a coordinated manner to restrict HCV infection by targeting the endocytosed HCV virion for lysosomal degradation. IFITM2 and IFITM3 display anti-HCV activity that may complement the anti-HCV activity of IFITM1 by inhibiting the late stages of HCV entry, possibly in a coordinated manner by trapping the virion in the endosomal pathway and targeting it for degradation at the lysosome. Exerts opposing activities on SARS-CoV-2, including amphipathicity-dependent restriction of virus at endosomes and amphipathicity-independent enhancement of infection at the plasma membrane. This is Interferon-induced transmembrane protein 3 from Mus musculus (Mouse).